The following is a 605-amino-acid chain: ATP-dependent RNA helicase dbp9 (605 aa).

The disordered stretch occupies residues 1 to 30 (MKRKLDANDVPSPEAADKKEKKEEDDADFE). The span at 15-24 (AADKKEKKEE) shows a compositional bias: basic and acidic residues. A Q motif motif is present at residues 27 to 55 (ADFESLNLDPRLRQALIKEKFTKPTLVQA). A Helicase ATP-binding domain is found at 58-236 (IPLALEGKDI…GLFCRSPVTL (179 aa)). An ATP-binding site is contributed by 71–78 (AKTGSGKT). Positions 184-187 (DEAD) match the DEAD box motif. Residues 247 to 469 (GVSQFVVRCA…EVKPYHFEMK (223 aa)) enclose the Helicase C-terminal domain. 2 disordered regions span residues 339-373 (ARKS…VSGK) and 564-605 (RKQN…RGRK). Residues 350-361 (EAGSSDEDEGEP) show a composition bias toward acidic residues. Basic residues predominate over residues 572–591 (RKAREKNRGKGNGRKFAGVK).

It belongs to the DEAD box helicase family. DDX56/DBP9 subfamily.

The protein localises to the nucleus. Its subcellular location is the nucleolus. It carries out the reaction ATP + H2O = ADP + phosphate + H(+). Functionally, ATP-binding RNA helicase involved in the biogenesis of 60S ribosomal subunits and is required for the normal formation of 25S and 5.8S rRNAs. This chain is ATP-dependent RNA helicase dbp9 (dbp9), found in Aspergillus oryzae (strain ATCC 42149 / RIB 40) (Yellow koji mold).